The primary structure comprises 159 residues: 2-C-methyl-D-erythritol 2,4-cyclodiphosphate synthase (159 aa).

Residues D8 and H10 each coordinate a divalent metal cation. Residues 8-10 and 34-35 contribute to the 4-CDP-2-C-methyl-D-erythritol 2-phosphate site; these read DVH and HS. Residue H42 participates in a divalent metal cation binding. 4-CDP-2-C-methyl-D-erythritol 2-phosphate-binding positions include 56–58, 61–65, 132–135, F139, and R142; these read DIG, FPDTD, and TTTE.

This sequence belongs to the IspF family. Homotrimer. It depends on a divalent metal cation as a cofactor.

The enzyme catalyses 4-CDP-2-C-methyl-D-erythritol 2-phosphate = 2-C-methyl-D-erythritol 2,4-cyclic diphosphate + CMP. It participates in isoprenoid biosynthesis; isopentenyl diphosphate biosynthesis via DXP pathway; isopentenyl diphosphate from 1-deoxy-D-xylulose 5-phosphate: step 4/6. Functionally, involved in the biosynthesis of isopentenyl diphosphate (IPP) and dimethylallyl diphosphate (DMAPP), two major building blocks of isoprenoid compounds. Catalyzes the conversion of 4-diphosphocytidyl-2-C-methyl-D-erythritol 2-phosphate (CDP-ME2P) to 2-C-methyl-D-erythritol 2,4-cyclodiphosphate (ME-CPP) with a corresponding release of cytidine 5-monophosphate (CMP). This is 2-C-methyl-D-erythritol 2,4-cyclodiphosphate synthase from Syntrophobacter fumaroxidans (strain DSM 10017 / MPOB).